The following is a 1242-amino-acid chain: Structural polyprotein (1242 aa).

Residues 14–101 are disordered; that stretch reads WRPRMPPRPW…PKRKPGRRER (88 aa). Over residues 26–42 the composition is skewed to low complexity; sequence RMPTMQRPDQQARQMQQ. Residues 35-66 are host transcription inhibition; that stretch reads QQARQMQQLIAAVSTLALRQNAAAPQRGKKKQ. The Nuclear localization signal motif lies at 59–96; the sequence is PQRGKKKQPRRKKPKPQPEKPKKQEQKPKQKKAPKRKP. Residues 61–73 show a composition bias toward basic residues; that stretch reads RGKKKQPRRKKPK. A compositionally biased stretch (basic and acidic residues) spans 74 to 86; the sequence is PQPEKPKKQEQKP. A binding to the viral RNA region spans residues 82 to 111; sequence QEQKPKQKKAPKRKPGRRERMCMKIEHDCI. Basic residues predominate over residues 87–98; the sequence is KQKKAPKRKPGR. The segment at 96 to 110 is ribosome-binding; sequence PGRRERMCMKIEHDC. C110 and C125 are oxidised to a cystine. In terms of domain architecture, Peptidase S3 spans 110 to 258; sequence CIFEVKHEGK…KITPEGTVEW (149 aa). The active-site Charge relay system is the H136. Residues 141–151 carry the Nuclear export signal motif; that stretch reads IDNADLARLSY. Residues 152–157 form an interaction with spike glycoprotein E2 region; it reads KKSSKY. The active-site Charge relay system is D158. The segment at 180-190 is dimerization of the capsid protein; it reads PEGHYNWHYGA. S210 (charge relay system) is an active-site residue. A dimerization of the capsid protein region spans residues 216–220; sequence DNKGP. The tract at residues 259-272 is functions as an uncleaved signal peptide for the precursor of protein E3/E2; that stretch reads AASTVTAMCLLTNI. 8 cysteine pairs are disulfide-bonded: C267/C276, C281/C285, C284/C316, C343/C449, C346/C352, C415/C429, C477/C589, and C527/C544. N-linked (GlcNAc...) asparagine; by host glycosylation occurs at N271. The Extracellular portion of the chain corresponds to 325–690; the sequence is STANHFNAYK…YYYGLHPTTT (366 aa). 2 interaction with host Mxra8 receptor regions span residues 350–353 and 386–388; these read HSCH and HDH. Interaction with host Mxra8 receptor regions lie at residues 508-511 and 540-546; these read QSGN and TINSCTV. Residue N586 is glycosylated (N-linked (GlcNAc...) asparagine; by host). Residues 691-711 traverse the membrane as a helical segment; it reads IVVVIRVSVVVLLSFAASVYM. At 712–746 the chain is on the cytoplasmic side; it reads CVVARTKCLTPYALTPGAVVPVTIGVLCCAPKAHA. An interaction with the capsid protein region spans residues 714–718; the sequence is VARTK. 3 S-palmitoyl cysteine; by host lipidation sites follow: C719, C739, and C740. The transient transmembrane before p62-6K protein processing stretch occupies residues 719–739; it reads CLTPYALTPGAVVPVTIGVLC. The cysteines at positions 719 and 740 are disulfide-linked. Residues 747 to 761 are Extracellular-facing; sequence ASFAEGMAYLWDNNQ. Residue N760 is glycosylated (N-linked (GlcNAc...) asparagine; by host). A helical membrane pass occupies residues 762 to 782; sequence SMFWMELTGPLALLILATCCA. The Cytoplasmic segment spans residues 783–785; it reads RSL. A helical transmembrane segment spans residues 786-806; it reads LSCCKGSFLVAMSIGSAVASA. At 807 to 1217 the chain is on the extracellular side; the sequence is YEHTAIIPNQ…STAMTWAQHL (411 aa). Cystine bridges form between C855–C920, C868–C900, C869–C902, and C874–C884. The E1 fusion peptide loop stretch occupies residues 890-907; sequence VYPFMWGGAYCFCDSENT. Residues N947 and N1076 are each glycosylated (N-linked (GlcNAc...) asparagine; by host). Cystine bridges form between C1065/C1077, C1107/C1180, C1112/C1184, and C1134/C1174. The helical transmembrane segment at 1218-1238 threads the bilayer; it reads AGGVGLLIALAVLILVIVTCV. Residue C1237 is the site of S-palmitoyl cysteine; by host attachment. The Cytoplasmic segment spans residues 1239 to 1242; that stretch reads TLRR.

In terms of assembly, homodimer. Homomultimer. Interacts with host karyopherin KPNA4; this interaction allows the nuclear import of the viral capsid protein. Interacts with spike glycoprotein E2. Interacts with host IRAK1; the interaction leads to inhibition of IRAK1-dependent signaling. The precursor of protein E3/E2 and E1 form a heterodimer shortly after synthesis. As to quaternary structure, the precursor of protein E3/E2 and E1 form a heterodimer shortly after synthesis. Processing of the precursor of protein E3/E2 into E2 and E3 results in a heterodimer of the spike glycoproteins E2 and E1. Spike at virion surface are constituted of a trimer of E2-E1 heterodimers. After target cell attachment and endocytosis, E1 change conformation to form homotrimers. Interacts with 6K protein. In terms of assembly, interacts with spike glycoprotein E1. Processing of the precursor of protein E3/E2 into E2 and E3 results in a heterodimer of the spike glycoproteins E2 and E1. Spike at virion surface are constituted of a trimer of E2-E1 heterodimers. Interacts with 6K protein. Interacts with host MXRA8; this interaction mediates virus entry. Oligomer. Interacts with spike glycoprotein E1. Interacts with spike glycoprotein E2. Post-translationally, structural polyprotein: Specific enzymatic cleavages in vivo yield mature proteins. Capsid protein is auto-cleaved during polyprotein translation, unmasking a signal peptide at the N-terminus of the precursor of E3/E2. The remaining polyprotein is then targeted to the host endoplasmic reticulum, where host signal peptidase cleaves it into pE2, 6K and E1 proteins. pE2 is further processed to mature E3 and E2 by host furin in trans-Golgi vesicle. Palmitoylated via thioester bonds. These palmitoylations may induce disruption of the C-terminus transmembrane. This would result in the reorientation of E2 C-terminus from lumenal to cytoplasmic side. In terms of processing, N-glycosylated. Post-translationally, palmitoylated via thioester bonds.

The protein resides in the virion. The protein localises to the host cytoplasm. It is found in the host cell membrane. It localises to the host nucleus. Its subcellular location is the virion membrane. The protein resides in the host Golgi apparatus. The protein localises to the host trans-Golgi network. It is found in the host endoplasmic reticulum. It catalyses the reaction Autocatalytic release of the core protein from the N-terminus of the togavirus structural polyprotein by hydrolysis of a -Trp-|-Ser- bond.. Forms an icosahedral capsid with a T=4 symmetry composed of 240 copies of the capsid protein surrounded by a lipid membrane through which penetrate 80 spikes composed of trimers of E1-E2 heterodimers. The capsid protein binds to the viral RNA genome at a site adjacent to a ribosome binding site for viral genome translation following genome release. Possesses a protease activity that results in its autocatalytic cleavage from the nascent structural protein. Following its self-cleavage, the capsid protein transiently associates with ribosomes, and within several minutes the protein binds to viral RNA and rapidly assembles into icosahedric core particles. The resulting nucleocapsid eventually associates with the cytoplasmic domain of the spike glycoprotein E2 at the cell membrane, leading to budding and formation of mature virions. In case of infection, new virions attach to target cells and after clathrin-mediated endocytosis their membrane fuses with the host endosomal membrane. This leads to the release of the nucleocapsid into the cytoplasm, followed by an uncoating event necessary for the genomic RNA to become accessible. The uncoating might be triggered by the interaction of capsid proteins with ribosomes. Binding of ribosomes would release the genomic RNA since the same region is genomic RNA-binding and ribosome-binding. Specifically inhibits interleukin-1 receptor-associated kinase 1/IRAK1-dependent signaling during viral entry, representing a means by which the alphaviruses may evade innate immune detection and activation prior to viral gene expression. Its function is as follows. Provides the signal sequence for the translocation of the precursor of protein E3/E2 to the host endoplasmic reticulum. Furin-cleaved E3 remains associated with spike glycoprotein E1 and mediates pH protection of the latter during the transport via the secretory pathway. After virion release from the host cell, the assembly protein E3 is gradually released in the extracellular space. Functionally, plays a role in viral attachment to target host cell, by binding to the cell receptor MXRA8. Synthesized as a p62 precursor which is processed by furin at the cell membrane just before virion budding, giving rise to E2-E1 heterodimer. The p62-E1 heterodimer is stable, whereas E2-E1 is unstable and dissociate at low pH. p62 is processed at the last step, presumably to avoid E1 fusion activation before its final export to cell surface. E2 C-terminus contains a transitory transmembrane that would be disrupted by palmitoylation, resulting in reorientation of the C-terminal tail from lumenal to cytoplasmic side. This step is critical since E2 C-terminus is involved in budding by interacting with capsid proteins. This release of E2 C-terminus in cytoplasm occurs lately in protein export, and precludes premature assembly of particles at the endoplasmic reticulum membrane. In terms of biological role, acts as a viroporin that participates in virus glycoprotein processing and transport to the plasma membrane, cell permeabilization and budding of viral particles. Disrupts the calcium homeostasis of the cell, probably at the endoplasmic reticulum level. This leads to cytoplasmic calcium elevation. Because of its lipophilic properties, the 6K protein is postulated to influence the selection of lipids that interact with the transmembrane domains of the glycoproteins, which, in turn, affects the deformability of the bilayer required for the extreme curvature that occurs as budding proceeds. Present in low amount in virions, about 3% compared to viral glycoproteins. Class II viral fusion protein. Fusion activity is inactive as long as E1 is bound to E2 in mature virion. After virus attachment to target cell via host MXRA8 and endocytosis, acidification of the endosome induce dissociation of E1/E2 heterodimer and concomitant trimerization of the E1 subunits. This E1 trimer is fusion active, and promotes release of viral nucleocapsid in cytoplasm after endosome and viral membrane fusion. Efficient fusion requires the presence of cholesterol and sphingolipid in the target membrane. The chain is Structural polyprotein from Mayaro virus (strain Brazil) (MAYV).